A 2729-amino-acid chain; its full sequence is Protein NO VEIN (2729 aa).

A disordered region spans residues 1–27; it reads MQGNHDGSWSLHPSTNNGSGRANGNIN. 2 consecutive short sequence motifs (nuclear localization signal) follow at residues 194–201 and 473–480; these read KRKVDVLR and MKRLGGSN. Disordered regions lie at residues 477-517 and 2482-2515; these read GGSN…IPKL and LPSS…DVTE. 2 stretches are compositionally biased toward basic and acidic residues: residues 488–497 and 2496–2515; these read RNHEKSDSSK and NTDD…DVTE.

As to expression, specifically expressed in developing embryos, leaf primordia, and shoot and root apical meristems.

The protein resides in the nucleus. In terms of biological role, essential protein required for cell fate determination during embryogenesis. Mediates auxin-dependent coordinated cell-fate specification and patterning in embryos (e.g. cotyledon outgrowth and separation), shoots and roots (e.g. leaf vascular development, cellular patterning and stem cell maintenance in the meristems). Required for provascular PIN1 expression and region-specific expression of PIN7 in leaf primordia, cell type-specific expression of PIN3, PIN4, and PIN7 in the root, and PIN2 polarity in the root cortex. The polypeptide is Protein NO VEIN (Arabidopsis thaliana (Mouse-ear cress)).